A 102-amino-acid polypeptide reads, in one-letter code: UPF0751 protein DSY4013 (102 aa).

It belongs to the UPF0751 family.

The sequence is that of UPF0751 protein DSY4013 from Desulfitobacterium hafniense (strain Y51).